The sequence spans 387 residues: 3-ketoacyl-CoA thiolase (387 aa).

Cysteine 91 acts as the Acyl-thioester intermediate in catalysis. Catalysis depends on proton acceptor residues histidine 343 and cysteine 373.

The protein belongs to the thiolase-like superfamily. Thiolase family. Heterotetramer of two alpha chains (FadB) and two beta chains (FadA).

The protein resides in the cytoplasm. The enzyme catalyses an acyl-CoA + acetyl-CoA = a 3-oxoacyl-CoA + CoA. It participates in lipid metabolism; fatty acid beta-oxidation. Functionally, catalyzes the final step of fatty acid oxidation in which acetyl-CoA is released and the CoA ester of a fatty acid two carbons shorter is formed. In Shewanella baltica (strain OS155 / ATCC BAA-1091), this protein is 3-ketoacyl-CoA thiolase.